A 347-amino-acid chain; its full sequence is Phenylalanine--tRNA ligase alpha subunit (347 aa).

Residue E261 participates in Mg(2+) binding.

The protein belongs to the class-II aminoacyl-tRNA synthetase family. Phe-tRNA synthetase alpha subunit type 1 subfamily. As to quaternary structure, tetramer of two alpha and two beta subunits. It depends on Mg(2+) as a cofactor.

It localises to the cytoplasm. It catalyses the reaction tRNA(Phe) + L-phenylalanine + ATP = L-phenylalanyl-tRNA(Phe) + AMP + diphosphate + H(+). This chain is Phenylalanine--tRNA ligase alpha subunit, found in Streptococcus mutans serotype c (strain ATCC 700610 / UA159).